The following is a 103-amino-acid chain: Large ribosomal subunit protein bL21 (103 aa).

The protein belongs to the bacterial ribosomal protein bL21 family. Part of the 50S ribosomal subunit. Contacts protein L20.

In terms of biological role, this protein binds to 23S rRNA in the presence of protein L20. This is Large ribosomal subunit protein bL21 from Thioalkalivibrio sulfidiphilus (strain HL-EbGR7).